The chain runs to 243 residues: 2-C-methyl-D-erythritol 4-phosphate cytidylyltransferase (243 aa).

The protein belongs to the IspD/TarI cytidylyltransferase family. IspD subfamily. In terms of assembly, homodimer.

It carries out the reaction 2-C-methyl-D-erythritol 4-phosphate + CTP + H(+) = 4-CDP-2-C-methyl-D-erythritol + diphosphate. The protein operates within isoprenoid biosynthesis; isopentenyl diphosphate biosynthesis via DXP pathway; isopentenyl diphosphate from 1-deoxy-D-xylulose 5-phosphate: step 2/6. In terms of biological role, catalyzes the formation of 4-diphosphocytidyl-2-C-methyl-D-erythritol from CTP and 2-C-methyl-D-erythritol 4-phosphate (MEP). This chain is 2-C-methyl-D-erythritol 4-phosphate cytidylyltransferase, found in Photorhabdus laumondii subsp. laumondii (strain DSM 15139 / CIP 105565 / TT01) (Photorhabdus luminescens subsp. laumondii).